A 550-amino-acid polypeptide reads, in one-letter code: Hydroxylamine reductase (550 aa).

Residues C3, C6, C18, and C25 each contribute to the [2Fe-2S] cluster site. Residues H249, E273, C317, C405, C433, C458, E492, and K494 each coordinate hybrid [4Fe-2O-2S] cluster. A Cysteine persulfide modification is found at C405.

The protein belongs to the HCP family. [2Fe-2S] cluster is required as a cofactor. The cofactor is hybrid [4Fe-2O-2S] cluster.

Its subcellular location is the cytoplasm. The enzyme catalyses A + NH4(+) + H2O = hydroxylamine + AH2 + H(+). Its function is as follows. Catalyzes the reduction of hydroxylamine to form NH(3) and H(2)O. This chain is Hydroxylamine reductase, found in Shigella flexneri serotype 5b (strain 8401).